The sequence spans 515 residues: Maturase K (515 aa).

Belongs to the intron maturase 2 family. MatK subfamily.

Its subcellular location is the plastid. It is found in the chloroplast. In terms of biological role, usually encoded in the trnK tRNA gene intron. Probably assists in splicing its own and other chloroplast group II introns. This is Maturase K from Alpinia calcarata (Snap ginger).